A 630-amino-acid polypeptide reads, in one-letter code: A disintegrin and metalloproteinase with thrombospondin motifs 4 (630 aa).

Positions 1 to 5 (RRTKR) are excised as a propeptide. The Peptidase M12B domain maps to 11-221 (RFVETLVVAD…GYGHCLLDKP (211 aa)). Cystine bridges form between C86/C138, C115/C120, C132/C216, C170/C200, C242/C265, C253/C275, C260/C294, C288/C299, C325/C362, C329/C367, and C340/C352. N96 carries an N-linked (GlcNAc...) asparagine glycan. H154 is a binding site for Zn(2+). E155 is an active-site residue. Residues H158 and H164 each contribute to the Zn(2+) site. In terms of domain architecture, Disintegrin spans 233–303 (GKDYDADRQC…CMGGRCLHVD (71 aa)). Residues 313–368 (AGGWGPWGPWGDCSRTCGGGVQFSSRDCTKPVPRNGGKYCEGRRTPFRSCNTKNCP) form the TSP type-1 domain. An N-linked (GlcNAc...) asparagine glycan is attached at N474. A spacer region spans residues 479-630 (SKQSGSFKKF…LRKRTWAGRK (152 aa)).

Interacts with SRPX2. It depends on Zn(2+) as a cofactor. In terms of processing, the precursor is cleaved by a furin endopeptidase. Post-translationally, glycosylated. Can be O-fucosylated by POFUT2 on a serine or a threonine residue found within the consensus sequence C1-X(2)-(S/T)-C2-G of the TSP type-1 repeat domains where C1 and C2 are the first and second cysteine residue of the repeat, respectively. Fucosylated repeats can then be further glycosylated by the addition of a beta-1,3-glucose residue by the glucosyltransferase, B3GALTL. Fucosylation mediates the efficient secretion of ADAMTS family members. Can also be C-glycosylated with one or two mannose molecules on tryptophan residues within the consensus sequence W-X-X-W of the TPRs, and N-glycosylated. These other glycosylations can also facilitate secretion. Brain specific.

The protein resides in the secreted. Its subcellular location is the extracellular space. It localises to the extracellular matrix. The catalysed reaction is Glutamyl endopeptidase. Bonds cleaved include 370-Thr-Glu-Gly-Glu-|-Ala-Arg-Gly-Ser-377 in the interglobular domain of mammalian aggrecan.. Functionally, cleaves aggrecan, a cartilage proteoglycan, at the '392-Glu-|-Ala-393' site and may be involved in its turnover. Also cleaves COMP. May play an important role in the destruction of aggrecan in arthritic diseases. This Rattus norvegicus (Rat) protein is A disintegrin and metalloproteinase with thrombospondin motifs 4 (Adamts4).